A 481-amino-acid chain; its full sequence is uncharacterized protein (481 aa).

The interval 1–28 (MPQSNHYSHQSRSHNDRRRQQPDEKVQA) is disordered. One can recognise a TRAM domain in the interval 29–87 (TVNIGQRFPLTIRRLGINGEGIGYYKHVITFVKGALPEEVVVAEVTAVHPRYLEAKIRS). 4 residues coordinate S-adenosyl-L-methionine: Gln313, Tyr342, Asp363, and Asp411. The Nucleophile role is filled by Cys438.

Belongs to the class I-like SAM-binding methyltransferase superfamily. RNA M5U methyltransferase family.

This is an uncharacterized protein from Lactiplantibacillus plantarum (strain ATCC BAA-793 / NCIMB 8826 / WCFS1) (Lactobacillus plantarum).